The sequence spans 277 residues: Protein CIMAP1D (277 aa).

STPGR repeat units lie at residues 122–148 (PGPG…LGSR), 202–227 (PGPG…ILGR), and 238–263 (PGPG…MGIR). Residues 181–277 (PSYTVVGRTP…ASTMVGDTKC (97 aa)) are disordered.

The protein belongs to the CIMAP family.

This is Protein CIMAP1D (Cimap1d) from Mus musculus (Mouse).